Here is a 281-residue protein sequence, read N- to C-terminus: 2-dehydro-3-deoxyphosphooctonate aldolase (281 aa).

It belongs to the KdsA family.

Its subcellular location is the cytoplasm. It catalyses the reaction D-arabinose 5-phosphate + phosphoenolpyruvate + H2O = 3-deoxy-alpha-D-manno-2-octulosonate-8-phosphate + phosphate. It functions in the pathway carbohydrate biosynthesis; 3-deoxy-D-manno-octulosonate biosynthesis; 3-deoxy-D-manno-octulosonate from D-ribulose 5-phosphate: step 2/3. The protein operates within bacterial outer membrane biogenesis; lipopolysaccharide biosynthesis. The chain is 2-dehydro-3-deoxyphosphooctonate aldolase from Pseudomonas paraeruginosa (strain DSM 24068 / PA7) (Pseudomonas aeruginosa (strain PA7)).